Here is a 429-residue protein sequence, read N- to C-terminus: Serine--tRNA ligase (429 aa).

Position 235-237 (235-237 (TAE)) interacts with L-serine. 266–268 (RSE) is a binding site for ATP. L-serine is bound at residue glutamate 289. Residue 353 to 356 (EISS) coordinates ATP. Serine 389 lines the L-serine pocket.

This sequence belongs to the class-II aminoacyl-tRNA synthetase family. Type-1 seryl-tRNA synthetase subfamily. As to quaternary structure, homodimer. The tRNA molecule binds across the dimer.

It localises to the cytoplasm. It carries out the reaction tRNA(Ser) + L-serine + ATP = L-seryl-tRNA(Ser) + AMP + diphosphate + H(+). The enzyme catalyses tRNA(Sec) + L-serine + ATP = L-seryl-tRNA(Sec) + AMP + diphosphate + H(+). The protein operates within aminoacyl-tRNA biosynthesis; selenocysteinyl-tRNA(Sec) biosynthesis; L-seryl-tRNA(Sec) from L-serine and tRNA(Sec): step 1/1. Catalyzes the attachment of serine to tRNA(Ser). Is also able to aminoacylate tRNA(Sec) with serine, to form the misacylated tRNA L-seryl-tRNA(Sec), which will be further converted into selenocysteinyl-tRNA(Sec). In Haemophilus influenzae (strain PittGG), this protein is Serine--tRNA ligase.